The following is a 431-amino-acid chain: Enolase (431 aa).

Gln167 contacts (2R)-2-phosphoglycerate. The active-site Proton donor is Glu209. Residues Asp246, Glu289, and Asp316 each contribute to the Mg(2+) site. (2R)-2-phosphoglycerate is bound by residues Lys341, Arg370, Ser371, and Lys392. Catalysis depends on Lys341, which acts as the Proton acceptor.

This sequence belongs to the enolase family. In terms of assembly, component of the RNA degradosome, a multiprotein complex involved in RNA processing and mRNA degradation. Requires Mg(2+) as cofactor.

Its subcellular location is the cytoplasm. It is found in the secreted. The protein localises to the cell surface. It carries out the reaction (2R)-2-phosphoglycerate = phosphoenolpyruvate + H2O. It participates in carbohydrate degradation; glycolysis; pyruvate from D-glyceraldehyde 3-phosphate: step 4/5. Catalyzes the reversible conversion of 2-phosphoglycerate (2-PG) into phosphoenolpyruvate (PEP). It is essential for the degradation of carbohydrates via glycolysis. The chain is Enolase from Shewanella putrefaciens (strain CN-32 / ATCC BAA-453).